We begin with the raw amino-acid sequence, 310 residues long: Junctional adhesion molecule C (310 aa).

Residues 1–31 form the signal peptide; sequence MALRRPPRLRLCARLPDFFLLLLFRGCLIGA. The Extracellular segment spans residues 32 to 241; that stretch reads VNLKSSNRTP…EQEMEVYDLN (210 aa). Positions 35–127 constitute an Ig-like V-type domain; that stretch reads KSSNRTPVVQ…VARNDRKEID (93 aa). Disulfide bonds link Cys53–Cys115 and Cys160–Cys219. N-linked (GlcNAc...) asparagine glycosylation is found at Asn104 and Asn192. Positions 139-236 constitute an Ig-like C2-type domain; it reads PVTPVCRVPK…SARCEEQEME (98 aa). A helical transmembrane segment spans residues 242–262; sequence IGGIIGGVLVVLAVLALITLG. The Cytoplasmic segment spans residues 263–310; that stretch reads ICCAYRRGYFINNKQDGESYKNPGKPDGVNYIRTDEEGDFRHKSSFVI. S-palmitoyl cysteine attachment occurs at residues Cys264 and Cys265.

The protein belongs to the immunoglobulin superfamily. Interacts with ITGAM. Interacts with GORASP2. In terms of processing, proteolytically cleaved from endothelial cells surface into a soluble form by ADAM10 and ADAM17; the release of soluble JAM3 is increased by pro-inflammatory factors. Post-translationally, S-palmitoylated by ZDHHC7. S-palmitoylation promotes expression at tight junctions. As to expression, detected on round and elongated spermatids (at protein level). Highest expression in placenta, brain and kidney. Significant expression is detected on platelets. Expressed in intestinal mucosa cells. Expressed in the vascular endothelium. Found in serum (at protein level). Also detected in the synovial fluid of patients with rheumatoid arthritis, psoriatic arthritis or ostearthritis (at protein level).

It localises to the cell membrane. The protein resides in the cell junction. The protein localises to the desmosome. Its subcellular location is the tight junction. It is found in the secreted. In terms of biological role, junctional adhesion protein that mediates heterotypic cell-cell interactions with its cognate receptor JAM2 to regulate different cellular processes. Plays a role in homing and mobilization of hematopoietic stem and progenitor cells within the bone marrow. At the surface of bone marrow stromal cells, it contributes to the retention of the hematopoietic stem and progenitor cells expressing JAM3. Plays a central role in leukocytes extravasation by facilitating transmigration through the endothelium. Plays a role in spermatogenesis where JAM2 and JAM3, which are respectively expressed by Sertoli and germ cells, mediate an interaction between both cell types and play an essential role in the anchorage of germ cells onto Sertoli cells and the assembly of cell polarity complexes during spermatid differentiation. Also functions as a counter-receptor for ITGAM, mediating leukocyte-platelet interactions and is involved in the regulation of transepithelial migration of polymorphonuclear neutrophils (PMN). Plays a role in angiogenesis. Plays a role in the regulation of cell migration. During myogenesis, it is involved in myocyte fusion. Promotes chemotaxis of vascular endothelial cells and stimulates angiogenesis. In Homo sapiens (Human), this protein is Junctional adhesion molecule C (JAM3).